The primary structure comprises 525 residues: Cytochrome P450 714A2 (525 aa).

Over 1 to 3 the chain is Lumenal; that stretch reads MES. Residues 4–24 form a helical; Signal-anchor for type III membrane protein membrane-spanning segment; that stretch reads LVVHTVNAIWCIVIVGIFSVG. Topologically, residues 25–525 are cytoplasmic; the sequence is YHVYGRAVVE…PQHGVVIRVV (501 aa). Heme is bound at residue C475.

This sequence belongs to the cytochrome P450 family. It depends on heme as a cofactor. In terms of tissue distribution, expressed in the shoot apical meristem (SAM) and petioles of young leaves, in the leaf margin and petiole vein of cotyledons, and at low levels in the filaments of developing flowers. Not detected in siliques.

The protein resides in the endoplasmic reticulum membrane. In terms of biological role, involved in the inactivation of early gibberellin (GA) intermediates. The polypeptide is Cytochrome P450 714A2 (CYP714A2) (Arabidopsis thaliana (Mouse-ear cress)).